The sequence spans 296 residues: Probable redox regulatory protein BQ2027_MB0506C (296 aa).

Belongs to the Rv0495c family.

In terms of biological role, essential for maintaining intracellular redox homeostasis. The protein is Probable redox regulatory protein BQ2027_MB0506C of Mycobacterium bovis (strain ATCC BAA-935 / AF2122/97).